Consider the following 1687-residue polypeptide: Brefeldin A-inhibited guanine nucleotide-exchange protein 1 (1687 aa).

The disordered stretch occupies residues Ser494–Asp529. The segment covering Thr514–Leu523 has biased composition (basic and acidic residues). Positions Thr532–Asn719 constitute an SEC7 domain. Glu634 is a catalytic residue. A disordered region spans residues Lys1229–Gln1248. A compositionally biased stretch (polar residues) spans Ser1232–Gln1248.

In terms of assembly, homodimer.

It is found in the cytoplasm. The protein localises to the cytosol. It localises to the membrane. Its activity is regulated as follows. Inhibited by brefeldin A. Activates the ARF proteins by exchanging bound GDP for free GTP. Plays a role in vesicular protein sorting. The polypeptide is Brefeldin A-inhibited guanine nucleotide-exchange protein 1 (BIG1) (Arabidopsis thaliana (Mouse-ear cress)).